The primary structure comprises 505 residues: Pleckstrin homology domain-containing family D member 1 (505 aa).

The PH domain maps to 28 to 136 (KVQLYGVLWK…WLEMLQESGK (109 aa)). Positions 146-391 (EAMIKSLEAQ…KVRNKEKEER (246 aa)) form a coiled coil. Positions 264 to 284 (DKNQPQPLTNQSEQPPASDGL) are disordered. Polar residues predominate over residues 267-278 (QPQPLTNQSEQP). The residue at position 502 (Arg502) is an Omega-N-methylarginine.

Belongs to the PLEKHD1 family.

This is Pleckstrin homology domain-containing family D member 1 (Plekhd1) from Mus musculus (Mouse).